The following is a 310-amino-acid chain: Olfactory receptor 5P56 (310 aa).

Topologically, residues 1–25 (MEAQNHTTVKEFILLGLTENSTLRV) are extracellular. N-linked (GlcNAc...) asparagine glycosylation is found at Asn-5 and Asn-20. Residues 26–46 (ILFMIFLGIYTVTLVGNFSII) traverse the membrane as a helical segment. Over 47 to 54 (SLIRSCPQ) the chain is Cytoplasmic. A helical transmembrane segment spans residues 55–75 (LHTPMYLFLSHLALVDIGFST). The Extracellular portion of the chain corresponds to 76-99 (SITPIMLTGFLGHTVTLSVAACVA). Cys-97 and Cys-189 are joined by a disulfide. The helical transmembrane segment at 100-120 (QFCIAVTFGTVECFLLAVMAY) threads the bilayer. Topologically, residues 121 to 133 (DRYVAICSPLLYS) are cytoplasmic. The helical transmembrane segment at 134–154 (THMSPRICFLLVGASYVGGCV) threads the bilayer. Over 155 to 196 (NSGTFTSCLLILSFCGPNQIDHFFCDFPAVLKLSCSDVSIIG) the chain is Extracellular. A helical membrane pass occupies residues 197-217 (IIPSISAGSIIVITVFVIAVS). Residues 218 to 237 (YTYILITILNMRSTEGRHKA) lie on the Cytoplasmic side of the membrane. A helical membrane pass occupies residues 238–258 (FSTCTSHLTAVTLYYGTITFI). Over 259 to 271 (YVMPKSNYSTAQN) the chain is Extracellular. N-linked (GlcNAc...) asparagine glycosylation occurs at Asn-265. The helical transmembrane segment at 272-292 (KILSVFYTVVIPMLNPLIYSL) threads the bilayer. Topologically, residues 293–310 (RNRDVKEALRKAIIRIFP) are cytoplasmic.

Belongs to the G-protein coupled receptor 1 family.

It localises to the cell membrane. Its function is as follows. Potential odorant receptor. This chain is Olfactory receptor 5P56, found in Mus musculus (Mouse).